A 142-amino-acid polypeptide reads, in one-letter code: ATP synthase epsilon chain (142 aa).

The protein belongs to the ATPase epsilon chain family. In terms of assembly, F-type ATPases have 2 components, CF(1) - the catalytic core - and CF(0) - the membrane proton channel. CF(1) has five subunits: alpha(3), beta(3), gamma(1), delta(1), epsilon(1). CF(0) has three main subunits: a, b and c.

Its subcellular location is the cell inner membrane. Produces ATP from ADP in the presence of a proton gradient across the membrane. In Maridesulfovibrio salexigens (strain ATCC 14822 / DSM 2638 / NCIMB 8403 / VKM B-1763) (Desulfovibrio salexigens), this protein is ATP synthase epsilon chain.